Consider the following 557-residue polypeptide: CTP synthase (557 aa).

The tract at residues 1-270 is amidoligase domain; sequence MTKYVFVTGG…DAIICEELKL (270 aa). S13 lines the CTP pocket. S13 serves as a coordination point for UTP. ATP-binding positions include 14 to 19 and D71; that span reads SLGKGI. Mg(2+) is bound by residues D71 and E144. Residues 151 to 153, 191 to 196, and K227 contribute to the CTP site; these read DIE and KTKPTQ. UTP is bound by residues 191 to 196 and K227; that span reads KTKPTQ. The Glutamine amidotransferase type-1 domain maps to 295–547; the sequence is TIGMVGKYVD…VEAALAHQQS (253 aa). Residue G356 participates in L-glutamine binding. C383 serves as the catalytic Nucleophile; for glutamine hydrolysis. Residues 384 to 387, E407, and R473 contribute to the L-glutamine site; that span reads LGMQ. Catalysis depends on residues H520 and E522.

It belongs to the CTP synthase family. Homotetramer.

It carries out the reaction UTP + L-glutamine + ATP + H2O = CTP + L-glutamate + ADP + phosphate + 2 H(+). It catalyses the reaction L-glutamine + H2O = L-glutamate + NH4(+). The enzyme catalyses UTP + NH4(+) + ATP = CTP + ADP + phosphate + 2 H(+). It functions in the pathway pyrimidine metabolism; CTP biosynthesis via de novo pathway; CTP from UDP: step 2/2. With respect to regulation, allosterically activated by GTP, when glutamine is the substrate; GTP has no effect on the reaction when ammonia is the substrate. The allosteric effector GTP functions by stabilizing the protein conformation that binds the tetrahedral intermediate(s) formed during glutamine hydrolysis. Inhibited by the product CTP, via allosteric rather than competitive inhibition. Functionally, catalyzes the ATP-dependent amination of UTP to CTP with either L-glutamine or ammonia as the source of nitrogen. Regulates intracellular CTP levels through interactions with the four ribonucleotide triphosphates. The chain is CTP synthase from Paraburkholderia xenovorans (strain LB400).